The sequence spans 703 residues: Epidermal growth factor receptor (703 aa).

The signal sequence occupies residues 1–30; sequence MGVRSPLSASGPRGAAVLVLLLLGVALCSA. Over 31–654 the chain is Extracellular; that stretch reads VEEKKVCQGT…GCPNGSKTPS (624 aa). Cysteine 37 and cysteine 64 are oxidised to a cystine. N-linked (GlcNAc...) asparagine glycans are attached at residues asparagine 134, asparagine 190, and asparagine 200. 13 disulfides stabilise this stretch: cysteine 164/cysteine 194, cysteine 197/cysteine 206, cysteine 201/cysteine 214, cysteine 222/cysteine 230, cysteine 226/cysteine 238, cysteine 239/cysteine 247, cysteine 243/cysteine 255, cysteine 258/cysteine 267, cysteine 271/cysteine 298, cysteine 302/cysteine 314, cysteine 318/cysteine 333, cysteine 336/cysteine 340, and cysteine 344/cysteine 369. N-linked (GlcNAc...) asparagine glycosylation is found at asparagine 359, asparagine 368, and asparagine 420. 11 cysteine pairs are disulfide-bonded: cysteine 477/cysteine 506, cysteine 513/cysteine 522, cysteine 517/cysteine 530, cysteine 533/cysteine 542, cysteine 546/cysteine 562, cysteine 565/cysteine 581, cysteine 569/cysteine 589, cysteine 592/cysteine 601, cysteine 605/cysteine 627, cysteine 630/cysteine 638, and cysteine 634/cysteine 646. Asparagine 573 and asparagine 578 each carry an N-linked (GlcNAc...) asparagine glycan. Asparagine 613 and asparagine 633 each carry an N-linked (GlcNAc...) asparagine glycan. Asparagine 648 carries an N-linked (GlcNAc...) asparagine glycan. A helical transmembrane segment spans residues 655–667; the sequence is IAAGVVGGLLCLV. Topologically, residues 668 to 703 are cytoplasmic; it reads VVGLGIGLYLRRRHIVRKRTLRRLLQERELVEPLTP. Residues threonine 687 and threonine 702 each carry the phosphothreonine modification.

The protein belongs to the protein kinase superfamily. Tyr protein kinase family. EGF receptor subfamily. Binding of the ligand triggers homo- and/or heterodimerization of the receptor triggering its autophosphorylation. Post-translationally, phosphorylated. Autophosphorylates.

It is found in the cell membrane. It localises to the endoplasmic reticulum membrane. The protein localises to the golgi apparatus membrane. The protein resides in the nucleus membrane. Its subcellular location is the endosome. It is found in the endosome membrane. It localises to the nucleus. It carries out the reaction L-tyrosyl-[protein] + ATP = O-phospho-L-tyrosyl-[protein] + ADP + H(+). With respect to regulation, endocytosis and inhibition of the activated EGFR by phosphatases constitute immediate regulatory mechanisms. Moreover, inducible feedback inhibitors may constitute alternative regulatory mechanisms for the EGFR signaling. In terms of biological role, receptor tyrosine kinase binding ligands of the EGF family and activating several signaling cascades to convert extracellular cues into appropriate cellular responses. Known ligands include EGF and TGFA/TGF-alpha. Ligand binding triggers receptor homo- and/or heterodimerization and autophosphorylation on key cytoplasmic residues. The phosphorylated receptor recruits adapter proteins like GRB2 which in turn activates complex downstream signaling cascades. Activates at least 4 major downstream signaling cascades including the RAS-RAF-MEK-ERK, PI3 kinase-AKT, PLCgamma-PKC and STATs modules. May also activate the NF-kappa-B signaling cascade. This Gallus gallus (Chicken) protein is Epidermal growth factor receptor (EGFR).